A 540-amino-acid chain; its full sequence is Phosphatidylinositol 4-phosphate 5-kinase type-1 beta (540 aa).

The tract at residues 1–21 is disordered; that stretch reads MSSAAENGEAAPGKQNEEKTY. The region spanning 25 to 395 is the PIPK domain; it reads ASSAIKGAIQ…RFLKFMNSRV (371 aa). 3 positions are modified to phosphoserine: Ser445, Ser447, and Ser448.

In terms of assembly, interacts with RAC1, AJUBA, PLD1, PLD2 and ARF1. Detected in heart, pancreas, brain, kidney, skeletal muscle and lung.

The protein resides in the cytoplasm. It localises to the cytosol. Its subcellular location is the cell membrane. It is found in the endomembrane system. The enzyme catalyses a 1,2-diacyl-sn-glycero-3-phospho-(1D-myo-inositol 4-phosphate) + ATP = a 1,2-diacyl-sn-glycero-3-phospho-(1D-myo-inositol-4,5-bisphosphate) + ADP + H(+). The catalysed reaction is 1-octadecanoyl-2-(5Z,8Z,11Z,14Z)-eicosatetraenoyl-sn-glycero-3-phospho-1D-myo-inositol 4-phosphate + ATP = 1-octadecanoyl-2-(5Z,8Z,11Z,14Z)-eicosatetraenoyl-sn-glycero-3-phospho-1D-myo-inositol 4,5-bisphosphate + ADP + H(+). It carries out the reaction 1-octadecanoyl-2-(9Z)-octadecenoyl-sn-glycero-3-phospho-1D-myo-inositol 4-phosphate + ATP = 1-octadecanoyl-2-(9Z)-octadecenoyl-sn-glycero-3-phospho-1D-myo-inositol 4,5-bisphosphate + ADP + H(+). It catalyses the reaction 1-octadecanoyl-2-(9Z)-octadecenoyl-sn-glycero-3-phospho-1D-myo-inositol + ATP = 1-octadecanoyl-2-(9Z)-octadecenoyl-sn-glycero-3-phospho-1D-myo-inositol 5-phosphate + ADP + H(+). The enzyme catalyses 1-octadecanoyl-2-(9Z,12Z)-octadecadienoyl-sn-glycero-3-phospho-1D-myo-inositol + ATP = 1-octadecanoyl-2-(9Z,12Z)-octadecadienoyl-sn-glycero-3-phospho-1D-myo-inositol 5-phosphate + ADP + H(+). The catalysed reaction is 1-octadecanoyl-2-(5Z,8Z,11Z,14Z-eicosatetraenoyl)-sn-glycero-3-phospho-(1D-myo-inositol) + ATP = 1-octadecanoyl-2-(5Z,8Z,11Z,14Z)-eicosatetraenoyl-sn-glycero-3-phospho-1D-myo-inositol 5-phosphate + ADP + H(+). It carries out the reaction 1,2-di-(9Z,12Z)-octadecadienoyl-sn-glycero-3-phospho-1D-myo-inositol + ATP = 1,2-di(9Z,12Z)-octadecadienoyl-sn-glycero-3-phospho-1D-myo-inositol 5-phosphate + ADP + H(+). Its function is as follows. Catalyzes the phosphorylation of phosphatidylinositol 4-phosphate (PtdIns(4)P/PI4P) to form phosphatidylinositol 4,5-bisphosphate (PtdIns(4,5)P2/PIP2), a lipid second messenger that regulates several cellular processes such as signal transduction, vesicle trafficking, actin cytoskeleton dynamics, cell adhesion, and cell motility. PtdIns(4,5)P2 can directly act as a second messenger or can be utilized as a precursor to generate other second messengers: inositol 1,4,5-trisphosphate (IP3), diacylglycerol (DAG) or phosphatidylinositol-3,4,5-trisphosphate (PtdIns(3,4,5)P3/PIP3). Mediates RAC1-dependent reorganization of actin filaments. Contributes to the activation of phospholipase PLD2. Together with PIP5K1A, is required, after stimulation by G-protein coupled receptors, for the synthesis of IP3 that will induce stable platelet adhesion. The protein is Phosphatidylinositol 4-phosphate 5-kinase type-1 beta of Homo sapiens (Human).